The sequence spans 204 residues: MSNNNKYFTITKKQYKKMRRNKIELLFNVKVLKKKNGRQKFKILHEVENKPKIPIKIIEDQPESPKPLKPPKPPKPPKGPDNPEEPDSPEEPKETDQPGGPDNPNAGNKKMPTPEEYVTRKEFNEFKDSNNQRLTKIENKVDKLEVKVDKLAEIVQTQGEEIKELKVEQKAQSETLQLILKTLQKMNDRLDRMETRLDKIDSPK.

The interval 46–132 (EVENKPKIPI…FNEFKDSNNQ (87 aa)) is disordered. The segment covering 64-80 (SPKPLKPPKPPKPPKGP) has biased composition (pro residues). Positions 117 to 132 (YVTRKEFNEFKDSNNQ) are enriched in basic and acidic residues.

The protein belongs to the UPF0134 family.

The sequence is that of UPF0134 protein MPN_655 from Mycoplasma pneumoniae (strain ATCC 29342 / M129 / Subtype 1) (Mycoplasmoides pneumoniae).